Here is a 345-residue protein sequence, read N- to C-terminus: Serine proteinase inhibitor 2 (345 aa).

It belongs to the serpin family. Poxviruses subfamily.

The protein localises to the host cytoplasm. Viral serpin that inhibits both cysteine and serine proteinases involved in the regulation of host inflammatory and apoptosis processes. Major anti-apoptotic protein which inhibits both intrinsic and extrinsic pathways and strongly cleaves host CASP1 and CASP8 but is a rather poor inhibitor of host CASP3. Prevents the proteolytic activity of host interleukin-1-beta converting enzyme (ICE) and ICE-like enzymes. Can also block apoptosis through host tumor necrosis factor (TNF) receptor. The inhibition of host ICE is an example of a 'cross-class' interaction, in which a serpin inhibits a non-serine proteinase. Also inhibits granzyme B. This is Serine proteinase inhibitor 2 (OPG199) from Rabbitpox virus (strain Utrecht) (RPV).